Consider the following 475-residue polypeptide: 3-isopropylmalate dehydratase large subunit (475 aa).

3 residues coordinate [4Fe-4S] cluster: Cys353, Cys414, and Cys417.

This sequence belongs to the aconitase/IPM isomerase family. LeuC type 1 subfamily. In terms of assembly, heterodimer of LeuC and LeuD. [4Fe-4S] cluster serves as cofactor.

The enzyme catalyses (2R,3S)-3-isopropylmalate = (2S)-2-isopropylmalate. It functions in the pathway amino-acid biosynthesis; L-leucine biosynthesis; L-leucine from 3-methyl-2-oxobutanoate: step 2/4. Catalyzes the isomerization between 2-isopropylmalate and 3-isopropylmalate, via the formation of 2-isopropylmaleate. In Marinomonas sp. (strain MWYL1), this protein is 3-isopropylmalate dehydratase large subunit.